The following is a 212-amino-acid chain: ATP-dependent Clp protease proteolytic subunit (212 aa).

The Nucleophile role is filled by serine 114. Residue histidine 139 is part of the active site.

Belongs to the peptidase S14 family. As to quaternary structure, fourteen ClpP subunits assemble into 2 heptameric rings which stack back to back to give a disk-like structure with a central cavity, resembling the structure of eukaryotic proteasomes.

The protein resides in the cytoplasm. The enzyme catalyses Hydrolysis of proteins to small peptides in the presence of ATP and magnesium. alpha-casein is the usual test substrate. In the absence of ATP, only oligopeptides shorter than five residues are hydrolyzed (such as succinyl-Leu-Tyr-|-NHMec, and Leu-Tyr-Leu-|-Tyr-Trp, in which cleavage of the -Tyr-|-Leu- and -Tyr-|-Trp bonds also occurs).. Functionally, cleaves peptides in various proteins in a process that requires ATP hydrolysis. Has a chymotrypsin-like activity. Plays a major role in the degradation of misfolded proteins. The protein is ATP-dependent Clp protease proteolytic subunit of Aromatoleum aromaticum (strain DSM 19018 / LMG 30748 / EbN1) (Azoarcus sp. (strain EbN1)).